Reading from the N-terminus, the 268-residue chain is Aminoglycoside 3'-phosphotransferase (268 aa).

Aspartate 188 functions as the Proton acceptor in the catalytic mechanism.

This sequence belongs to the aminoglycoside phosphotransferase family.

The catalysed reaction is kanamycin A + ATP = kanamycin 3'-phosphate + ADP + H(+). In terms of biological role, resistance to kanamycin and structurally-related aminoglycosides, including amikacin. This chain is Aminoglycoside 3'-phosphotransferase (aph), found in Streptomyces fradiae (Streptomyces roseoflavus).